The following is a 90-amino-acid chain: Putative defensin-like protein 168 (90 aa).

Positions 1–27 are cleaved as a signal peptide; sequence MKYFTLFMISYIFISIFVFSHIHDVEA. 4 cysteine pairs are disulfide-bonded: Cys-32-Cys-90, Cys-43-Cys-66, Cys-51-Cys-84, and Cys-64-Cys-86.

The protein belongs to the DEFL family.

It localises to the secreted. This Arabidopsis thaliana (Mouse-ear cress) protein is Putative defensin-like protein 168.